The sequence spans 212 residues: 3-demethoxyubiquinol 3-hydroxylase (212 aa).

Glutamate 61, glutamate 91, histidine 94, glutamate 143, glutamate 175, and histidine 178 together coordinate Fe cation.

Belongs to the COQ7 family. It depends on Fe cation as a cofactor.

The protein resides in the cell membrane. It catalyses the reaction a 5-methoxy-2-methyl-3-(all-trans-polyprenyl)benzene-1,4-diol + AH2 + O2 = a 3-demethylubiquinol + A + H2O. Its pathway is cofactor biosynthesis; ubiquinone biosynthesis. Catalyzes the hydroxylation of 2-nonaprenyl-3-methyl-6-methoxy-1,4-benzoquinol during ubiquinone biosynthesis. In Paraburkholderia phytofirmans (strain DSM 17436 / LMG 22146 / PsJN) (Burkholderia phytofirmans), this protein is 3-demethoxyubiquinol 3-hydroxylase.